We begin with the raw amino-acid sequence, 423 residues long: MLDILLTNIGQLLTMDQEDGVLRQEAMKTLPVIESGAVGIKDGVIMFVGTAEEAKGLQAREIIDCEGKVVSPGLVDPHTHLVFGGSRENEIALKLQGVPYLEILEQGGGILSTVNATKKASKEELVKKANFHLDRMLSFGVTTVEAKSGYGLDDETEWKQLEVVAQLQKEHPIDLVSTFLGAHAVPKEYKGKSKEFLQWMLDLLPAIKEKELAEFVDIFCETGVFSVEESKEFLLEAKELGFDVKIHADEIDPLGGAEAAAEIGAASADHLVGASDKGIEMLANSNTVATLLPGTTFYLNKESFARGRKMIDEGVAVALATDFNPGSCPTENIQLVMSIAMLKLKMTPEEVWNAVTVNSAYAINRGDVAGKIRVGRKADLVLWDAHHYAYVPYHYGVSHVNTVWKNGNLAYTRGDKAWSKATI.

Fe(3+)-binding residues include H78 and H80. Zn(2+) is bound by residues H78 and H80. 4-imidazolone-5-propanoate is bound by residues R87, Y150, and H183. Y150 is an N-formimidoyl-L-glutamate binding site. A Fe(3+)-binding site is contributed by H247. A Zn(2+)-binding site is contributed by H247. E250 contributes to the 4-imidazolone-5-propanoate binding site. Position 322 (D322) interacts with Fe(3+). A Zn(2+)-binding site is contributed by D322. N324 and G326 together coordinate N-formimidoyl-L-glutamate. Residue S327 participates in 4-imidazolone-5-propanoate binding.

This sequence belongs to the metallo-dependent hydrolases superfamily. HutI family. It depends on Zn(2+) as a cofactor. Fe(3+) serves as cofactor.

It localises to the cytoplasm. It catalyses the reaction 4-imidazolone-5-propanoate + H2O = N-formimidoyl-L-glutamate. It participates in amino-acid degradation; L-histidine degradation into L-glutamate; N-formimidoyl-L-glutamate from L-histidine: step 3/3. Its function is as follows. Catalyzes the hydrolytic cleavage of the carbon-nitrogen bond in imidazolone-5-propanoate to yield N-formimidoyl-L-glutamate. It is the third step in the universal histidine degradation pathway. The polypeptide is Imidazolonepropionase (Bacillus cytotoxicus (strain DSM 22905 / CIP 110041 / 391-98 / NVH 391-98)).